The sequence spans 57 residues: RPSFCNLPVKPGPCSGFFSAFYYSQKTNKCHSFTYGGCRGPGNRFRTIEECRRTCVG.

Residues 5 to 55 (CNLPVKPGPCSGFFSAFYYSQKTNKCHSFTYGGCRGPGNRFRTIEECRRTC) enclose the BPTI/Kunitz inhibitor domain. Cystine bridges form between Cys5–Cys55, Cys14–Cys38, and Cys30–Cys51.

It belongs to the venom Kunitz-type family. In terms of tissue distribution, expressed by the venom gland.

Its subcellular location is the secreted. Its function is as follows. Interacts with vasopressin V2 receptor (V2R/AVPR2), probably in a selective manner. Inhibits vasopressin binding human V2R in the nanomolar range (Ki=21.5 nM), and also moderately inhibits vasopressin-induced cAMP production (IC(50)=574 nM). In vivo, intraperitoneal injection of this protein into rats increases diuresis by 2-fold, without any loss of electrolytes. This Dendroaspis viridis (Western green mamba) protein is Mambaquaretin-6.